The following is a 499-amino-acid chain: Bifunctional purine biosynthesis protein PurH (499 aa).

The 144-residue stretch at 1 to 144 (MIKRALISVF…KNFKDVVVLT (144 aa)) folds into the MGS-like domain.

This sequence belongs to the PurH family.

It carries out the reaction (6R)-10-formyltetrahydrofolate + 5-amino-1-(5-phospho-beta-D-ribosyl)imidazole-4-carboxamide = 5-formamido-1-(5-phospho-D-ribosyl)imidazole-4-carboxamide + (6S)-5,6,7,8-tetrahydrofolate. The enzyme catalyses IMP + H2O = 5-formamido-1-(5-phospho-D-ribosyl)imidazole-4-carboxamide. Its pathway is purine metabolism; IMP biosynthesis via de novo pathway; 5-formamido-1-(5-phospho-D-ribosyl)imidazole-4-carboxamide from 5-amino-1-(5-phospho-D-ribosyl)imidazole-4-carboxamide (10-formyl THF route): step 1/1. The protein operates within purine metabolism; IMP biosynthesis via de novo pathway; IMP from 5-formamido-1-(5-phospho-D-ribosyl)imidazole-4-carboxamide: step 1/1. In Clostridium botulinum (strain Okra / Type B1), this protein is Bifunctional purine biosynthesis protein PurH.